A 1337-amino-acid polypeptide reads, in one-letter code: ATP-dependent helicase/nuclease subunit A (1337 aa).

Residues 3-484 form the UvrD-like helicase ATP-binding domain; the sequence is FTPSKEQEPA…LDLSDNYRSR (482 aa). Position 24-31 (24-31) interacts with ATP; the sequence is ASAGSGKT. In terms of domain architecture, UvrD-like helicase C-terminal spans 522–867; it reads ADRDQASPAT…NVMTIHKSKG (346 aa).

Belongs to the helicase family. AddA subfamily. As to quaternary structure, heterodimer of AddA and AddB/RexB. Mg(2+) is required as a cofactor.

It carries out the reaction Couples ATP hydrolysis with the unwinding of duplex DNA by translocating in the 3'-5' direction.. It catalyses the reaction ATP + H2O = ADP + phosphate + H(+). Its function is as follows. The heterodimer acts as both an ATP-dependent DNA helicase and an ATP-dependent, dual-direction single-stranded exonuclease. Recognizes the chi site generating a DNA molecule suitable for the initiation of homologous recombination. The AddA nuclease domain is required for chi fragment generation; this subunit has the helicase and 3' -&gt; 5' nuclease activities. The protein is ATP-dependent helicase/nuclease subunit A of Limosilactobacillus fermentum (strain NBRC 3956 / LMG 18251) (Lactobacillus fermentum).